A 553-amino-acid chain; its full sequence is Arginine--tRNA ligase (553 aa).

A 'HIGH' region motif is present at residues alanine 130–histidine 140.

Belongs to the class-I aminoacyl-tRNA synthetase family. Monomer.

The protein resides in the cytoplasm. The catalysed reaction is tRNA(Arg) + L-arginine + ATP = L-arginyl-tRNA(Arg) + AMP + diphosphate. This is Arginine--tRNA ligase from Staphylococcus aureus (strain MRSA252).